A 311-amino-acid chain; its full sequence is tRNA dimethylallyltransferase (311 aa).

10–17 (GPTAVGKT) contacts ATP. Position 12 to 17 (12 to 17 (TAVGKT)) interacts with substrate. An interaction with substrate tRNA region spans residues 35–38 (DSMQ).

It belongs to the IPP transferase family. Monomer. Mg(2+) is required as a cofactor.

It carries out the reaction adenosine(37) in tRNA + dimethylallyl diphosphate = N(6)-dimethylallyladenosine(37) in tRNA + diphosphate. In terms of biological role, catalyzes the transfer of a dimethylallyl group onto the adenine at position 37 in tRNAs that read codons beginning with uridine, leading to the formation of N6-(dimethylallyl)adenosine (i(6)A). This is tRNA dimethylallyltransferase from Anoxybacillus flavithermus (strain DSM 21510 / WK1).